The following is a 428-amino-acid chain: Gamma-glutamyl phosphate reductase (428 aa).

Belongs to the gamma-glutamyl phosphate reductase family.

The protein resides in the cytoplasm. It carries out the reaction L-glutamate 5-semialdehyde + phosphate + NADP(+) = L-glutamyl 5-phosphate + NADPH + H(+). It functions in the pathway amino-acid biosynthesis; L-proline biosynthesis; L-glutamate 5-semialdehyde from L-glutamate: step 2/2. Functionally, catalyzes the NADPH-dependent reduction of L-glutamate 5-phosphate into L-glutamate 5-semialdehyde and phosphate. The product spontaneously undergoes cyclization to form 1-pyrroline-5-carboxylate. This chain is Gamma-glutamyl phosphate reductase, found in Streptomyces avermitilis (strain ATCC 31267 / DSM 46492 / JCM 5070 / NBRC 14893 / NCIMB 12804 / NRRL 8165 / MA-4680).